The following is a 78-amino-acid chain: Protein SlyX homolog (78 aa).

The protein belongs to the SlyX family.

In Xanthomonas campestris pv. campestris (strain 8004), this protein is Protein SlyX homolog.